Reading from the N-terminus, the 1061-residue chain is Translation initiation factor IF-2 (1061 aa).

Disordered stretches follow at residues 51–199 (FARG…VAVK) and 250–460 (AFQA…IPTE). Basic and acidic residues predominate over residues 67 to 77 (NEPKPKIDWSR). Low complexity-rich tracts occupy residues 97–113 (VAAA…KAPV), 120–130 (RPSAPRPAVTA), 167–177 (VPQPRQPSAVV), 184–199 (TPAI…VAVK), and 250–278 (AFQA…AEAP). Pro residues predominate over residues 279-291 (PVAPEKPAVPAPP). Residues 340–360 (SPGGPGGPGGGYGQRPSGPGG) are compositionally biased toward gly residues. Residues 381 to 391 (GFNNGPRPGFG) show a composition bias toward low complexity. Positions 392–405 (QRPGGFGQRPGMGA) are enriched in gly residues. The region spanning 552 to 728 (SRPPVVTVMG…CLVADLGNLK (177 aa)) is the tr-type G domain. Positions 561-568 (GHVDHGKT) are G1. 561-568 (GHVDHGKT) contributes to the GTP binding site. Positions 586–590 (GITQH) are G2. The segment at 614–617 (DTPG) is G3. GTP is bound by residues 614-618 (DTPGH) and 668-671 (NKID). The tract at residues 668-671 (NKID) is G4. The tract at residues 704–706 (SAK) is G5.

This sequence belongs to the TRAFAC class translation factor GTPase superfamily. Classic translation factor GTPase family. IF-2 subfamily.

Its subcellular location is the cytoplasm. Its function is as follows. One of the essential components for the initiation of protein synthesis. Protects formylmethionyl-tRNA from spontaneous hydrolysis and promotes its binding to the 30S ribosomal subunits. Also involved in the hydrolysis of GTP during the formation of the 70S ribosomal complex. The chain is Translation initiation factor IF-2 from Acidobacterium capsulatum (strain ATCC 51196 / DSM 11244 / BCRC 80197 / JCM 7670 / NBRC 15755 / NCIMB 13165 / 161).